Here is a 417-residue protein sequence, read N- to C-terminus: Serine hydroxymethyltransferase 1 (417 aa).

(6S)-5,6,7,8-tetrahydrofolate-binding positions include L121 and 125-127; that span reads GHL. K230 bears the N6-(pyridoxal phosphate)lysine mark. (6S)-5,6,7,8-tetrahydrofolate is bound at residue 355–357; sequence SPF.

The protein belongs to the SHMT family. Homodimer. It depends on pyridoxal 5'-phosphate as a cofactor.

The protein localises to the cytoplasm. The enzyme catalyses (6R)-5,10-methylene-5,6,7,8-tetrahydrofolate + glycine + H2O = (6S)-5,6,7,8-tetrahydrofolate + L-serine. The protein operates within one-carbon metabolism; tetrahydrofolate interconversion. It participates in amino-acid biosynthesis; glycine biosynthesis; glycine from L-serine: step 1/1. Functionally, catalyzes the reversible interconversion of serine and glycine with tetrahydrofolate (THF) serving as the one-carbon carrier. This reaction serves as the major source of one-carbon groups required for the biosynthesis of purines, thymidylate, methionine, and other important biomolecules. Also exhibits THF-independent aldolase activity toward beta-hydroxyamino acids, producing glycine and aldehydes, via a retro-aldol mechanism. The sequence is that of Serine hydroxymethyltransferase 1 from Pseudomonas syringae pv. tomato (strain ATCC BAA-871 / DC3000).